The chain runs to 633 residues: uncharacterized protein (633 aa).

The disordered stretch occupies residues 1 to 188; it reads MNNRGGFSHP…GQSSFYNSSY (188 aa). Low complexity-rich tracts occupy residues 32–80 and 104–148; these read GQPQ…GGNN and NNGN…TNSR. Positions 152-178 are enriched in gly residues; sequence RGGSSRGGSSRGGNSGSSRGGSRGGYR. A coiled-coil region spans residues 580–607; sequence KSKNWTVDQASDELKKLSKNLRLLVSKH. Residues 611 to 633 are disordered; that stretch reads TKFQPPSADHTTQFEQDDEEEEN.

This is an uncharacterized protein from Dictyostelium discoideum (Social amoeba).